The primary structure comprises 461 residues: Transforming growth factor beta-1-induced transcript 1 protein (461 aa).

The residue at position 1 (M1) is an N-acetylmethionine. Residues 1-87 (MEDLDALLSD…PFSSSSGVLG (87 aa)) form a disordered region. The tract at residues 1–200 (MEDLDALLSD…GCPSPPGQTS (200 aa)) is transcription activation. The segment at 1-240 (MEDLDALLSD…CNKPIAGQVV (240 aa)) is interaction with PTK2B/PYK2. Residues 3-15 (DLDALLSDLETTT) carry the LD motif 1 motif. T33 is subject to Phosphothreonine. A Phosphotyrosine modification is found at Y38. Low complexity predominate over residues 44–53 (TGSGESSGTT). Residue Y60 is modified to Phosphotyrosine. S68 is subject to Phosphoserine. The tract at residues 83–136 (SGVLGNGLCELDRLLQELNATQFNITDEIMSQFPSSKMAEGEEKEDQSEDKSSP) is interaction with PTK2/FAK1. The short motif at 92-104 (ELDRLLQELNATQ) is the LD motif 2 element. A disordered region spans residues 116–154 (PSSKMAEGEEKEDQSEDKSSPTVPPSPFPAPSKPSATSA). The segment covering 137 to 147 (TVPPSPFPAPS) has biased composition (pro residues). Phosphoserine occurs at positions 141, 164, and 186. The short motif at 157-168 (ELDRLMASLSDF) is the LD motif 3 element. Residues 171 to 204 (QNHLPASGPPQPPAASPTREGCPSPPGQTSKGSL) are disordered. A Phosphothreonine modification is found at T188. S194 bears the Phosphoserine mark. The LD motif 4 signature appears at 203-215 (SLDTMLGLLQSDL). LIM zinc-binding domains are found at residues 226–285 (GLCG…RFSP), 286–343 (RCGF…QLFA), 344–403 (PRCQ…QRGS), and 404–461 (LCAT…KLFG). Phosphoserine is present on S403. At T407 the chain carries Phosphothreonine.

The protein belongs to the paxillin family. Homooligomer. Interacts with PPARG. Interacts with TRAF4. Interacts with CRIP2. Interacts with HSPB1. Interacts with ILK. Interacts with LIMS1 and LIMS2. Interacts with NCK2. Interacts with NUDT16L1. Interacts with PAK. Interacts with PTPN12. Interacts with TCF3. Interacts with TCF7L2. Interacts with VCL. Interacts (via LD motif 3) with GIT1. Also interacts with GIT2. Forms a complex with ARHGEF7. Interacts with AR/androgen receptor in a ligand-dependent manner. Interacts with CSK. Interacts with PTK2/FAK1 and PTK2B/PYK2. Interacts with SLC6A3. Interacts with SLC6A4. Interacts with NR3C1. Interacts with SMAD3. Interacts with MAPK15. Interacts with SRC. Interacts with LYN. Interacts with talin. Interacts (via LIM zinc-binding domain 2) with CBLC (via RING-type zinc finger); the interaction is direct and enhances CBLC E3 ubiquitin-protein ligase activity. Interacts with PARVA. Interacts with PXN. In terms of processing, phosphorylated by gonadotropin-releasing hormone-activated SRC. As to expression, ubiquitously expressed. Higher expression is detected in lung and spleen. Expression decreases during pregnancy in mammary glands. Expressed in all brain areas, with higher levels in cerebellum, prefrontal cortex and hypothalamus. Expressed in smooth muscle, myoepithelial cells and platelets (at protein level). Preferentially expressed in mesenchymal versus epithelial cells (at protein level).

The protein localises to the cell junction. It localises to the focal adhesion. The protein resides in the nucleus matrix. It is found in the cytoplasm. Its subcellular location is the cytoskeleton. Its function is as follows. Functions as a molecular adapter coordinating multiple protein-protein interactions at the focal adhesion complex and in the nucleus. Links various intracellular signaling modules to plasma membrane receptors and regulates the Wnt and TGFB signaling pathways. May also regulate SLC6A3 and SLC6A4 targeting to the plasma membrane hence regulating their activity. In the nucleus, functions as a nuclear receptor coactivator regulating glucocorticoid, androgen, mineralocorticoid and progesterone receptor transcriptional activity. May play a role in the processes of cell growth, proliferation, migration, differentiation and senescence. May have a zinc-dependent DNA-binding activity. The protein is Transforming growth factor beta-1-induced transcript 1 protein (Tgfb1i1) of Mus musculus (Mouse).